The sequence spans 143 residues: Transcriptional regulator MraZ (143 aa).

SpoVT-AbrB domains are found at residues 5-47 (TYTP…PKEE) and 76-119 (ADEQ…DAQA).

It belongs to the MraZ family. As to quaternary structure, forms oligomers.

It is found in the cytoplasm. Its subcellular location is the nucleoid. This chain is Transcriptional regulator MraZ, found in Corynebacterium glutamicum (strain R).